The primary structure comprises 255 residues: 1-acyl-sn-glycerol-3-phosphate acyltransferase (255 aa).

An HXXXXD motif motif is present at residues His-78–Asp-83.

This sequence belongs to the 1-acyl-sn-glycerol-3-phosphate acyltransferase family.

The protein localises to the cell inner membrane. It catalyses the reaction a 1-acyl-sn-glycero-3-phosphate + an acyl-CoA = a 1,2-diacyl-sn-glycero-3-phosphate + CoA. Its pathway is phospholipid metabolism; CDP-diacylglycerol biosynthesis; CDP-diacylglycerol from sn-glycerol 3-phosphate: step 2/3. Its function is as follows. Converts lysophosphatidic acid (LPA) into phosphatidic acid by incorporating acyl moiety at the 2 position. This chain is 1-acyl-sn-glycerol-3-phosphate acyltransferase (plsC), found in Neisseria meningitidis serogroup B (strain ATCC BAA-335 / MC58).